Reading from the N-terminus, the 218-residue chain is Adenylate kinase (218 aa).

Position 10–15 (10–15) interacts with ATP; the sequence is GAGKGT. The NMP stretch occupies residues 30 to 59; sequence STGDMLRAAVKAGTPLGLEAKKVMDAGGLV. AMP contacts are provided by residues threonine 31, arginine 36, 57–59, 85–88, and glutamine 92; these read GLV and GFPR. An LID region spans residues 122–159; the sequence is GRRVHPASGRVYHTKYNPPKVEGKDDETGDELVQRDDD. ATP-binding positions include arginine 123 and 132–133; that span reads VY. The tract at residues 139 to 160 is disordered; it reads PPKVEGKDDETGDELVQRDDDQ. AMP-binding residues include arginine 156 and arginine 167. Glycine 203 is a binding site for ATP.

It belongs to the adenylate kinase family. Monomer.

The protein localises to the cytoplasm. The catalysed reaction is AMP + ATP = 2 ADP. It functions in the pathway purine metabolism; AMP biosynthesis via salvage pathway; AMP from ADP: step 1/1. Functionally, catalyzes the reversible transfer of the terminal phosphate group between ATP and AMP. Plays an important role in cellular energy homeostasis and in adenine nucleotide metabolism. The protein is Adenylate kinase of Alcanivorax borkumensis (strain ATCC 700651 / DSM 11573 / NCIMB 13689 / SK2).